Here is a 567-residue protein sequence, read N- to C-terminus: Microtubule-associated protein 70-1 (567 aa).

Positions 38–341 (VRVELTRLEN…AARSEAQLKD (304 aa)) form a coiled coil. Positions 220-440 (ILDRMHRQKV…SGMNVSTDSS (221 aa)) are required for targeting to microtubules. 2 disordered regions span residues 425–457 (KGHV…EFTS) and 534–567 (LEKE…ARNM). Residues 440–453 (SEDKESNNSDEKAN) are compositionally biased toward basic and acidic residues. A coiled-coil region spans residues 516 to 545 (KKRRMEVAAMEKEMAALRLEKEQDNKAKRF).

It belongs to the MAP70 family.

It localises to the cytoplasm. Its subcellular location is the cytoskeleton. Its function is as follows. Plant-specific protein that interact with microtubules. This is Microtubule-associated protein 70-1 (MAP70.1) from Oryza sativa subsp. japonica (Rice).